A 231-amino-acid chain; its full sequence is Large ribosomal subunit protein uL1 (231 aa).

The protein belongs to the universal ribosomal protein uL1 family. Part of the 50S ribosomal subunit.

Functionally, binds directly to 23S rRNA. The L1 stalk is quite mobile in the ribosome, and is involved in E site tRNA release. In terms of biological role, protein L1 is also a translational repressor protein, it controls the translation of the L11 operon by binding to its mRNA. This chain is Large ribosomal subunit protein uL1, found in Staphylococcus epidermidis (strain ATCC 35984 / DSM 28319 / BCRC 17069 / CCUG 31568 / BM 3577 / RP62A).